The primary structure comprises 138 residues: Large ribosomal subunit protein uL16 (138 aa).

The protein belongs to the universal ribosomal protein uL16 family. In terms of assembly, part of the 50S ribosomal subunit.

In terms of biological role, binds 23S rRNA and is also seen to make contacts with the A and possibly P site tRNAs. The chain is Large ribosomal subunit protein uL16 from Anaeromyxobacter dehalogenans (strain 2CP-1 / ATCC BAA-258).